We begin with the raw amino-acid sequence, 350 residues long: Galactokinase (350 aa).

A substrate-binding site is contributed by 14-17; that stretch reads EHTD. ATP-binding positions include Ser46 and 96–102; that span reads GAGLSSS. Mg(2+) contacts are provided by Ser102 and Glu134. Asp146 acts as the Proton acceptor in catalysis. Tyr196 serves as a coordination point for substrate.

Belongs to the GHMP kinase family. GalK subfamily.

Its subcellular location is the cytoplasm. The enzyme catalyses alpha-D-galactose + ATP = alpha-D-galactose 1-phosphate + ADP + H(+). The protein operates within carbohydrate metabolism; galactose metabolism. Catalyzes the transfer of the gamma-phosphate of ATP to D-galactose to form alpha-D-galactose-1-phosphate (Gal-1-P). This Thermotoga neapolitana protein is Galactokinase.